A 173-amino-acid polypeptide reads, in one-letter code: Microfibrillar-associated protein 5 (173 aa).

Residues 1–21 (MSLLGPKVLLFLAAFIITSDW) form the signal peptide. The short motif at 30 to 32 (RGD) is the Cell attachment site element. O-linked (GalNAc...) threonine glycosylation occurs at Thr-54. Residue Asn-79 is glycosylated (N-linked (GlcNAc...) asparagine).

The protein belongs to the MFAP family. As to quaternary structure, interacts with TGFB2. Interacts with BMP2. Interacts with FBN1 (via N-terminal domain) and FBN2. Forms intermolecular disulfide bonds either with other MAGP-2 molecules or with other components of the microfibrils. Post-translationally, N- and O-glycosylated. O-glycosylated with core 1 or possibly core 8 glycans. O-glycan heterogeneity at Thr-54: HexHexNAc (major) and HexHexNAc + sulfate (minor).

The protein localises to the secreted. It localises to the extracellular space. The protein resides in the extracellular matrix. Its function is as follows. May play a role in hematopoiesis. In the cardiovascular system, could regulate growth factors or participate in cell signaling in maintaining large vessel integrity. Component of the elastin-associated microfibrils. This Homo sapiens (Human) protein is Microfibrillar-associated protein 5 (MFAP5).